The sequence spans 258 residues: Imidazole glycerol phosphate synthase subunit HisF (258 aa).

Residues aspartate 11 and aspartate 130 contribute to the active site.

Belongs to the HisA/HisF family. Heterodimer of HisH and HisF.

It localises to the cytoplasm. It catalyses the reaction 5-[(5-phospho-1-deoxy-D-ribulos-1-ylimino)methylamino]-1-(5-phospho-beta-D-ribosyl)imidazole-4-carboxamide + L-glutamine = D-erythro-1-(imidazol-4-yl)glycerol 3-phosphate + 5-amino-1-(5-phospho-beta-D-ribosyl)imidazole-4-carboxamide + L-glutamate + H(+). It functions in the pathway amino-acid biosynthesis; L-histidine biosynthesis; L-histidine from 5-phospho-alpha-D-ribose 1-diphosphate: step 5/9. Functionally, IGPS catalyzes the conversion of PRFAR and glutamine to IGP, AICAR and glutamate. The HisF subunit catalyzes the cyclization activity that produces IGP and AICAR from PRFAR using the ammonia provided by the HisH subunit. This is Imidazole glycerol phosphate synthase subunit HisF from Enterobacter sp. (strain 638).